A 428-amino-acid chain; its full sequence is Adenylosuccinate synthetase (428 aa).

GTP is bound by residues 11–17 (GDEGKGK) and 39–41 (GHT). Catalysis depends on D12, which acts as the Proton acceptor. D12 and G39 together coordinate Mg(2+). IMP-binding positions include 12–15 (DEGK), 37–40 (NAGH), T130, R144, N226, T241, and R305. The active-site Proton donor is H40. 301–307 (VTTGRKR) provides a ligand contact to substrate. GTP-binding positions include R307, 333–335 (KLD), and 415–417 (GTG).

This sequence belongs to the adenylosuccinate synthetase family. As to quaternary structure, homodimer. Mg(2+) serves as cofactor.

It is found in the cytoplasm. It carries out the reaction IMP + L-aspartate + GTP = N(6)-(1,2-dicarboxyethyl)-AMP + GDP + phosphate + 2 H(+). The protein operates within purine metabolism; AMP biosynthesis via de novo pathway; AMP from IMP: step 1/2. Its function is as follows. Plays an important role in the de novo pathway and in the salvage pathway of purine nucleotide biosynthesis. Catalyzes the first committed step in the biosynthesis of AMP from IMP. This is Adenylosuccinate synthetase from Lodderomyces elongisporus (strain ATCC 11503 / CBS 2605 / JCM 1781 / NBRC 1676 / NRRL YB-4239) (Yeast).